We begin with the raw amino-acid sequence, 798 residues long: Elongation factor G, mitochondrial (798 aa).

The transit peptide at 1–24 (MRVIRAAAALNSSCAASSRQGARY) directs the protein to the mitochondrion. Residues 97-383 (SMVRNIGIAA…AVCDYLPNPG (287 aa)) form the tr-type G domain. Residues 106–113 (AHIDSGKT), 181–185 (DTPGH), and 235–238 (NKMD) contribute to the GTP site.

The protein belongs to the TRAFAC class translation factor GTPase superfamily. Classic translation factor GTPase family. EF-G/EF-2 subfamily.

The protein resides in the mitochondrion. It participates in protein biosynthesis; polypeptide chain elongation. Its function is as follows. Mitochondrial GTPase that catalyzes the GTP-dependent ribosomal translocation step during translation elongation. During this step, the ribosome changes from the pre-translocational (PRE) to the post-translocational (POST) state as the newly formed A-site-bound peptidyl-tRNA and P-site-bound deacylated tRNA move to the P and E sites, respectively. Catalyzes the coordinated movement of the two tRNA molecules, the mRNA and conformational changes in the ribosome. This chain is Elongation factor G, mitochondrial, found in Chaetomium globosum (strain ATCC 6205 / CBS 148.51 / DSM 1962 / NBRC 6347 / NRRL 1970) (Soil fungus).